The following is a 356-amino-acid chain: Neutral protease 2 homolog UREG_03761 (356 aa).

Positions 1–19 are cleaved as a signal peptide; that stretch reads MRFSSSFLSVLALASQALA. A propeptide spanning residues 20–181 is cleaved from the precursor; it reads FPLNDLPTTD…ALPEATLDKR (162 aa). Disulfide bonds link cysteine 189–cysteine 259 and cysteine 266–cysteine 284. Histidine 308 provides a ligand contact to Zn(2+). The active site involves glutamate 309. 2 residues coordinate Zn(2+): histidine 312 and aspartate 323.

It belongs to the peptidase M35 family. Zn(2+) is required as a cofactor.

Its subcellular location is the secreted. It carries out the reaction Preferential cleavage of bonds with hydrophobic residues in P1'. Also 3-Asn-|-Gln-4 and 8-Gly-|-Ser-9 bonds in insulin B chain.. In terms of biological role, secreted metalloproteinase that allows assimilation of proteinaceous substrates. Shows high activities on basic nuclear substrates such as histone and protamine. The chain is Neutral protease 2 homolog UREG_03761 from Uncinocarpus reesii (strain UAMH 1704).